A 280-amino-acid chain; its full sequence is 30 kDa immediate-early protein 2 (280 aa).

The tract at residues 36–164 (SEEEQGEEVE…KKSKRISELD (129 aa)) is disordered. 3 stretches are compositionally biased toward low complexity: residues 47–67 (RGAT…TSPT), 90–101 (SSSSSSCSSASD), and 132–147 (AASS…SSGG).

Its function is as follows. Activates the E1.7 promoter. This activation is augmented by the IE1 protein. It down-regulates the transcription of genes under the control of the major IE promoter. This chain is 30 kDa immediate-early protein 2 (UL122), found in Human cytomegalovirus (strain Towne) (HHV-5).